The following is a 74-amino-acid chain: Cecropin-P4 (74 aa).

The first 13 residues, 1 to 13, serve as a signal peptide directing secretion; sequence MFLMYLLVQTTES. A propeptide spans 45–74 (removed in mature form); that stretch reads HRRSVAHQEEASLHVKTDELPSPDTVREQL. Positions 51 to 74 are disordered; the sequence is HQEEASLHVKTDELPSPDTVREQL.

The protein belongs to the cecropin family. In terms of tissue distribution, expressed in the body wall, intestine, uterus and ovary.

The protein resides in the secreted. Functionally, has antibacterial activity against several Gram-positive and Gram-negative bacteria. Is weakly active against yeasts. Acts by a nonpore mechanism. This Ascaris suum (Pig roundworm) protein is Cecropin-P4 (ASCEC-4).